The sequence spans 192 residues: Fe/S biogenesis protein NfuA (192 aa).

[4Fe-4S] cluster-binding residues include cysteine 150 and cysteine 153.

It belongs to the NfuA family. In terms of assembly, homodimer. The cofactor is [4Fe-4S] cluster.

In terms of biological role, involved in iron-sulfur cluster biogenesis. Binds a 4Fe-4S cluster, can transfer this cluster to apoproteins, and thereby intervenes in the maturation of Fe/S proteins. Could also act as a scaffold/chaperone for damaged Fe/S proteins. In Vesicomyosocius okutanii subsp. Calyptogena okutanii (strain HA), this protein is Fe/S biogenesis protein NfuA.